Reading from the N-terminus, the 338-residue chain is Fructose-1,6-bisphosphatase class 1 (338 aa).

Mg(2+) is bound by residues E92, D113, L115, and D116. Substrate-binding positions include 116 to 119, N208, and K274; that span reads DGSS. E280 is a binding site for Mg(2+).

This sequence belongs to the FBPase class 1 family. As to quaternary structure, homotetramer. It depends on Mg(2+) as a cofactor.

The protein localises to the cytoplasm. The catalysed reaction is beta-D-fructose 1,6-bisphosphate + H2O = beta-D-fructose 6-phosphate + phosphate. It functions in the pathway carbohydrate biosynthesis; gluconeogenesis. The chain is Fructose-1,6-bisphosphatase class 1 from Paramagnetospirillum magneticum (strain ATCC 700264 / AMB-1) (Magnetospirillum magneticum).